Here is a 141-residue protein sequence, read N- to C-terminus: Large ribosomal subunit protein uL16 (141 aa).

Belongs to the universal ribosomal protein uL16 family. Part of the 50S ribosomal subunit.

In terms of biological role, binds 23S rRNA and is also seen to make contacts with the A and possibly P site tRNAs. This is Large ribosomal subunit protein uL16 from Campylobacter fetus subsp. fetus (strain 82-40).